The sequence spans 215 residues: Probable Rab-related GTPase (215 aa).

20–27 lines the GTP pocket; that stretch reads GSSGVGKS. The Effector region motif lies at 42 to 50; that stretch reads VSPTIGAAF. GTP-binding positions include 69-73 and 127-130; these read DTAGQ and NKID. S-geranylgeranyl cysteine; by host attachment occurs at residues Cys-211 and Cys-212. Cys-212 bears the Cysteine methyl ester; by host mark. Residues 213–215 constitute a propeptide, removed in mature form; that stretch reads YIS.

It belongs to the small GTPase superfamily. Rab family.

The protein localises to the host cell membrane. Functionally, may be involved in protein transport. In Acanthamoeba polyphaga mimivirus (APMV), this protein is Probable Rab-related GTPase.